Reading from the N-terminus, the 274-residue chain is Kit ligand (274 aa).

Positions 1-25 (MKKTQTWIITCIYLQLLLFNPLVHS) are cleaved as a signal peptide. Gln26 carries the post-translational modification Pyrrolidone carboxylic acid. Topologically, residues 26–215 (QGICRNRVTD…SNSIEDSSLQ (190 aa)) are extracellular. 2 disulfides stabilise this stretch: Cys29–Cys114 and Cys68–Cys164. 4 N-linked (GlcNAc...) asparagine glycosylation sites follow: Asn90, Asn97, Asn145, and Asn196. A helical membrane pass occupies residues 216–238 (WAAVALPAFFSLVIGFAFGALYW). Residues 239-274 (KKKQPNLTRTVENRQINEEDNEISMLQEKEREFQEV) lie on the Cytoplasmic side of the membrane.

The protein belongs to the SCF family. Homodimer, non-covalently linked. A soluble form is produced by proteolytic processing of the extracellular domain.

It localises to the cytoplasm. The protein localises to the cytoskeleton. Its subcellular location is the cell membrane. It is found in the cell projection. The protein resides in the lamellipodium. It localises to the filopodium. The protein localises to the secreted. Functionally, stimulates the proliferation of mast cells. Able to augment the proliferation of both myeloid and lymphoid hematopoietic progenitors in bone marrow culture. Also mediates cell-cell adhesion. Acts synergistically with other cytokines, probably interleukins. This Capra hircus (Goat) protein is Kit ligand (KITLG).